Reading from the N-terminus, the 370-residue chain is Cobalt-precorrin-5B C(1)-methyltransferase (370 aa).

This sequence belongs to the CbiD family.

The enzyme catalyses Co-precorrin-5B + S-adenosyl-L-methionine = Co-precorrin-6A + S-adenosyl-L-homocysteine. The protein operates within cofactor biosynthesis; adenosylcobalamin biosynthesis; cob(II)yrinate a,c-diamide from sirohydrochlorin (anaerobic route): step 6/10. Functionally, catalyzes the methylation of C-1 in cobalt-precorrin-5B to form cobalt-precorrin-6A. The polypeptide is Cobalt-precorrin-5B C(1)-methyltransferase (Prochlorococcus marinus (strain MIT 9215)).